Consider the following 401-residue polypeptide: Transcriptional regulator Myc-2 (401 aa).

O-linked (GlcNAc) threonine glycosylation occurs at threonine 58. The 9aaTAD motif lies at 76 to 84 (EMVSEFLGD). Disordered stretches follow at residues 177-251 (SSKS…SRYP) and 286-325 (LESS…HNVL). Over residues 205-230 (DSEDEEEEEEEEEEEEEEEEEEEEID) the composition is skewed to acidic residues. Residues 233–247 (TVEKRQKRNEAEVSD) show a composition bias toward basic and acidic residues. A compositionally biased stretch (low complexity) spans 288 to 297 (SSSSNNSSSN). One can recognise a bHLH domain in the interval 317–369 (DKRRTHNVLERQRRNELKLSFFALRDEIPEVANNEKAAKVVILKKATECIHSM). The leucine-zipper stretch occupies residues 376-397 (LLSIKEQLRRKSEQLKHRLQQL).

Efficient DNA binding requires dimerization with another bHLH protein. Binds DNA as a heterodimer with MAX.

It is found in the nucleus. Transcription factor that binds DNA in a non-specific manner, yet also specifically recognizes the core sequence 5'-CAC[GA]TG-3'. Activates the transcription of growth-related genes. This Cyprinus carpio (Common carp) protein is Transcriptional regulator Myc-2 (mycb).